Here is a 534-residue protein sequence, read N- to C-terminus: uncharacterized protein (534 aa).

The first 22 residues, 1 to 22 (MGLRLLFSLICVFCISNIFTQA), serve as a signal peptide directing secretion. N-linked (GlcNAc...) asparagine glycosylation is present at Asn-31. Disordered stretches follow at residues 70 to 145 (PTYY…SSVS) and 176 to 418 (SSLS…SSAP). Asn-426 carries an N-linked (GlcNAc...) asparagine glycan.

It is found in the endoplasmic reticulum. Its subcellular location is the cell membrane. This is an uncharacterized protein from Schizosaccharomyces pombe (strain 972 / ATCC 24843) (Fission yeast).